The sequence spans 475 residues: MKYELVVGLEVHCQLNTNSKAFCGCSALFGKPANTNVCPVCLALPGALPVLNRRVVEDAVKIGLATGCSVASHSILARKNYFYPDLPKGYQISQYEEPICSEGMIRIDVGEGQRDIRLIRIHIEEDAGKSIHDIGEDTYIDVNRSGVPLLEIVSYPDMRTAKEASAYLQKVRQIVKYLGISDGNMEEGSLRCDANVSIRPYGSEEYGTRTEIKNMNSFKNVEKAIEFEANRHSEIIDAGGAIVQETRLWDADKGETRSMRGKEFAHDYRYFPDPDLVPVLVDDDMLERMRLELPEFPEDRAARFVSEFAIPAYDAAVLTVDREVADYFEETVRVSGDAKVASNWVMGEVMRTLKEKYLDIAEFGISSLRLGELIRLIGAGTISNTIAKQVFEIMMSDEAAAEVIVTREGLAQVSDFGAIDMVLQEVLDANPGQLADYRAGKTKLFGFFVGQCMARMKGKGNPAIVNDLLQKKLAG.

The protein belongs to the GatB/GatE family. GatB subfamily. As to quaternary structure, heterotrimer of A, B and C subunits.

The enzyme catalyses L-glutamyl-tRNA(Gln) + L-glutamine + ATP + H2O = L-glutaminyl-tRNA(Gln) + L-glutamate + ADP + phosphate + H(+). The catalysed reaction is L-aspartyl-tRNA(Asn) + L-glutamine + ATP + H2O = L-asparaginyl-tRNA(Asn) + L-glutamate + ADP + phosphate + 2 H(+). Allows the formation of correctly charged Asn-tRNA(Asn) or Gln-tRNA(Gln) through the transamidation of misacylated Asp-tRNA(Asn) or Glu-tRNA(Gln) in organisms which lack either or both of asparaginyl-tRNA or glutaminyl-tRNA synthetases. The reaction takes place in the presence of glutamine and ATP through an activated phospho-Asp-tRNA(Asn) or phospho-Glu-tRNA(Gln). The chain is Aspartyl/glutamyl-tRNA(Asn/Gln) amidotransferase subunit B from Chlorobium phaeobacteroides (strain DSM 266 / SMG 266 / 2430).